Here is a 130-residue protein sequence, read N- to C-terminus: MCHTSCSSGCQPSCCVSSSCQPSCCVSSPCQASCFVSSPCQPSCCVSSSCQSACCRPAICIPVRYQVACCVPVSCGPTVCMAPSCQSSVCVPVSCRPVCVTSSCQSSGCCQPSCPTLVCKPVTCSNPSCC.

Repeat copies occupy residues 10-14, 15-29, 34-38, 40-44, 45-49, 60-64, 85-89, 90-94, 95-99, 104-108, 109-113, 114-118, 119-123, and 124-128. The segment at 10–128 is 14 X 5 AA approximate repeats; the sequence is CQPSCCVSSS…CKPVTCSNPS (119 aa).

This sequence belongs to the KRTAP type 12 family. In terms of assembly, interacts with hair keratins. In terms of tissue distribution, expressed only in the head and back skin of a 3 day old mouse. Not expressed in adult skin.

Functionally, in the hair cortex, hair keratin intermediate filaments are embedded in an interfilamentous matrix, consisting of hair keratin-associated proteins (KRTAP), which are essential for the formation of a rigid and resistant hair shaft through their extensive disulfide bond cross-linking with abundant cysteine residues of hair keratins. The matrix proteins include the high-sulfur and high-glycine-tyrosine keratins. This Mus musculus (Mouse) protein is Keratin-associated protein 12-1.